The chain runs to 77 residues: U8-lycotoxin-Ls1h (77 aa).

The first 20 residues, 1–20 (MKLIIFTGLVLFAIVSLIEV), serve as a signal peptide directing secretion. Residues 21-26 (QADNER) constitute a propeptide that is removed on maturation.

It belongs to the neurotoxin 19 (CSTX) family. 08 (U8-Lctx) subfamily. In terms of processing, contains 4 disulfide bonds. Expressed by the venom gland.

The protein resides in the secreted. The chain is U8-lycotoxin-Ls1h from Lycosa singoriensis (Wolf spider).